Reading from the N-terminus, the 319-residue chain is L-lactate dehydrogenase 2 (319 aa).

Residues V16, D37, K42, Y68, and 82-83 (GA) each bind NAD(+). Q85 and R91 together coordinate substrate. NAD(+)-binding positions include S104, 121-123 (AAN), and S146. 123 to 126 (NPVD) is a substrate binding site. A substrate-binding site is contributed by 151-154 (DSAR). H178 serves as the catalytic Proton acceptor. Position 222 is a phosphotyrosine (Y222). T231 contributes to the substrate binding site.

This sequence belongs to the LDH/MDH superfamily. LDH family. As to quaternary structure, homotetramer.

The protein resides in the cytoplasm. The catalysed reaction is (S)-lactate + NAD(+) = pyruvate + NADH + H(+). It participates in fermentation; pyruvate fermentation to lactate; (S)-lactate from pyruvate: step 1/1. Catalyzes the conversion of lactate to pyruvate (Potential). Contributes to S.aureus growth during nitrosative stress in both aerobically and anaerobically cultured cells, despite playing a secondary role in this resistance mechanism. This is L-lactate dehydrogenase 2 from Staphylococcus aureus (strain Mu3 / ATCC 700698).